The following is a 539-amino-acid chain: T-complex protein 1 subunit zeta (539 aa).

This sequence belongs to the TCP-1 chaperonin family. As to quaternary structure, heterooligomeric complex of about 850 to 900 kDa that forms two stacked rings, 12 to 16 nm in diameter.

It localises to the cytoplasm. Molecular chaperone; assists the folding of proteins upon ATP hydrolysis. Known to play a role, in vitro, in the folding of actin and tubulin. The sequence is that of T-complex protein 1 subunit zeta (cct-6) from Caenorhabditis elegans.